Reading from the N-terminus, the 211-residue chain is tRNA (guanine-N(7)-)-methyltransferase (211 aa).

Residues glutamate 44, aspartate 69, aspartate 96, and aspartate 118 each contribute to the S-adenosyl-L-methionine site. Residue aspartate 118 is part of the active site. Position 122 (lysine 122) interacts with substrate. The interval 124–129 is interaction with RNA; it reads KHEKRR. Substrate-binding positions include aspartate 154 and 191–194; that span reads TEYE.

The protein belongs to the class I-like SAM-binding methyltransferase superfamily. TrmB family.

It carries out the reaction guanosine(46) in tRNA + S-adenosyl-L-methionine = N(7)-methylguanosine(46) in tRNA + S-adenosyl-L-homocysteine. It functions in the pathway tRNA modification; N(7)-methylguanine-tRNA biosynthesis. Catalyzes the formation of N(7)-methylguanine at position 46 (m7G46) in tRNA. In Streptococcus uberis (strain ATCC BAA-854 / 0140J), this protein is tRNA (guanine-N(7)-)-methyltransferase.